The chain runs to 383 residues: uncharacterized protein (383 aa).

The disordered stretch occupies residues 1–55; it reads MSSKLTVNAHYSPLKDEDPLDHIDSQTALDSMETDSTGKSSLYFSKSDDPLSKDI. A compositionally biased stretch (basic and acidic residues) spans 13–24; it reads PLKDEDPLDHID. A compositionally biased stretch (polar residues) spans 25-44; it reads SQTALDSMETDSTGKSSLYF. Positions 46-55 are enriched in basic and acidic residues; the sequence is KSDDPLSKDI. The next 10 membrane-spanning stretches (helical) occupy residues 87–107, 112–132, 157–177, 179–199, 205–225, 228–248, 262–282, 299–319, 329–349, and 352–372; these read LTIFFAVSSQIVFAILVTILN, NIINAPLLMLSFQMAFTSLMV, FIFVKILGIVSKTYCLAFVPV, FYQISRGLLLPFTILLSFVLL, LFPFGGCLLVMLGFGFGVRFE, VAPIGIILGVWSSFTTAIESV, LIYIFSALMSVFCLLLSVASL, FFIVLILSSLSNFYLNIATFT, YMISVSARSILQTLLAVAFLG, and LYGNRIYGVILILVGTLLYTL.

The protein belongs to the TPT transporter family.

The protein localises to the membrane. This is an uncharacterized protein from Schizosaccharomyces pombe (strain 972 / ATCC 24843) (Fission yeast).